The following is a 610-amino-acid chain: Dihydroxy-acid dehydratase (610 aa).

Asp-81 contacts Mg(2+). A [2Fe-2S] cluster-binding site is contributed by Cys-122. Mg(2+) contacts are provided by Asp-123 and Lys-124. An N6-carboxylysine modification is found at Lys-124. Cys-193 serves as a coordination point for [2Fe-2S] cluster. Glu-489 provides a ligand contact to Mg(2+). Ser-515 acts as the Proton acceptor in catalysis.

The protein belongs to the IlvD/Edd family. In terms of assembly, homodimer. Requires [2Fe-2S] cluster as cofactor. It depends on Mg(2+) as a cofactor.

The enzyme catalyses (2R)-2,3-dihydroxy-3-methylbutanoate = 3-methyl-2-oxobutanoate + H2O. The catalysed reaction is (2R,3R)-2,3-dihydroxy-3-methylpentanoate = (S)-3-methyl-2-oxopentanoate + H2O. The protein operates within amino-acid biosynthesis; L-isoleucine biosynthesis; L-isoleucine from 2-oxobutanoate: step 3/4. Its pathway is amino-acid biosynthesis; L-valine biosynthesis; L-valine from pyruvate: step 3/4. Functions in the biosynthesis of branched-chain amino acids. Catalyzes the dehydration of (2R,3R)-2,3-dihydroxy-3-methylpentanoate (2,3-dihydroxy-3-methylvalerate) into 2-oxo-3-methylpentanoate (2-oxo-3-methylvalerate) and of (2R)-2,3-dihydroxy-3-methylbutanoate (2,3-dihydroxyisovalerate) into 2-oxo-3-methylbutanoate (2-oxoisovalerate), the penultimate precursor to L-isoleucine and L-valine, respectively. The protein is Dihydroxy-acid dehydratase of Xylella fastidiosa (strain M23).